The primary structure comprises 141 residues: Putative pre-16S rRNA nuclease (141 aa).

The protein belongs to the YqgF nuclease family.

It localises to the cytoplasm. Functionally, could be a nuclease involved in processing of the 5'-end of pre-16S rRNA. This is Putative pre-16S rRNA nuclease from Cupriavidus pinatubonensis (strain JMP 134 / LMG 1197) (Cupriavidus necator (strain JMP 134)).